We begin with the raw amino-acid sequence, 195 residues long: Dephospho-CoA kinase (195 aa).

Positions 2–195 (IISLTGGIGV…DIVDSLNLNT (194 aa)) constitute a DPCK domain. 10–15 (GVGKSF) contributes to the ATP binding site.

It belongs to the CoaE family.

Its subcellular location is the cytoplasm. The enzyme catalyses 3'-dephospho-CoA + ATP = ADP + CoA + H(+). It participates in cofactor biosynthesis; coenzyme A biosynthesis; CoA from (R)-pantothenate: step 5/5. Catalyzes the phosphorylation of the 3'-hydroxyl group of dephosphocoenzyme A to form coenzyme A. This is Dephospho-CoA kinase from Wolbachia pipientis wMel.